Here is a 403-residue protein sequence, read N- to C-terminus: TPR repeat-containing protein Synpcc7942_0270 (403 aa).

TPR repeat units lie at residues 208–243 (AYLC…PEPA), 244–282 (VRYE…AIHK), 283–316 (LGAW…APQA), 317–350 (TVAL…DPND), and 351–387 (PSLY…QGSP).

The chain is TPR repeat-containing protein Synpcc7942_0270 from Synechococcus elongatus (strain ATCC 33912 / PCC 7942 / FACHB-805) (Anacystis nidulans R2).